Here is a 312-residue protein sequence, read N- to C-terminus: L-lactate dehydrogenase (312 aa).

Val-14, Asp-35, and Tyr-66 together coordinate NAD(+). The substrate site is built by Gln-83 and Arg-90. NAD(+)-binding positions include Ser-103, 120–122 (ASN), and Ser-145. Substrate is bound at residue 122–125 (NPVD). 150–153 (DSAR) contributes to the substrate binding site. His-177 acts as the Proton acceptor in catalysis. The residue at position 220 (Tyr-220) is a Phosphotyrosine. Thr-229 serves as a coordination point for substrate.

The protein belongs to the LDH/MDH superfamily. LDH family. As to quaternary structure, homotetramer.

The protein localises to the cytoplasm. It catalyses the reaction (S)-lactate + NAD(+) = pyruvate + NADH + H(+). The protein operates within fermentation; pyruvate fermentation to lactate; (S)-lactate from pyruvate: step 1/1. Its function is as follows. Catalyzes the conversion of lactate to pyruvate. This Mycoplasma genitalium (strain ATCC 33530 / DSM 19775 / NCTC 10195 / G37) (Mycoplasmoides genitalium) protein is L-lactate dehydrogenase.